The following is an 87-amino-acid chain: DNA-directed RNA polymerase subunit omega (87 aa).

It belongs to the RNA polymerase subunit omega family. The RNAP catalytic core consists of 2 alpha, 1 beta, 1 beta' and 1 omega subunit. When a sigma factor is associated with the core the holoenzyme is formed, which can initiate transcription.

It carries out the reaction RNA(n) + a ribonucleoside 5'-triphosphate = RNA(n+1) + diphosphate. Promotes RNA polymerase assembly. Latches the N- and C-terminal regions of the beta' subunit thereby facilitating its interaction with the beta and alpha subunits. This is DNA-directed RNA polymerase subunit omega from Pseudomonas putida (strain ATCC 700007 / DSM 6899 / JCM 31910 / BCRC 17059 / LMG 24140 / F1).